A 395-amino-acid polypeptide reads, in one-letter code: Zinc finger protein HD1 (395 aa).

Residues 30–72 (PWARPCDGCRAAPSVVYCRADAAYLCASCDARVHAANRVASRH) form a B box-type 1; atypical zinc finger. The Zn(2+) site is built by Cys35, Cys38, Cys58, His63, Cys78, Cys81, Cys101, and His106. A B box-type 2; atypical zinc finger spans residues 73 to 117 (ERVRVCEACERAPAALACRADAAALCVACDVQVHSANPLPAITIP). 2 disordered regions span residues 147–176 (SKDS…SNNG) and 208–228 (GMHE…EFAE). The segment covering 152-175 (NNNNNNNNNDNDNNDNNNSNSSNN) has biased composition (low complexity). The 43-residue stretch at 326-368 (REARVLRYREKKKARKFEKTIRYETRKAYAEARPRIKGRFAKR) folds into the CCT domain.

This sequence belongs to the CONSTANS family. As to quaternary structure, interacts with HAL3 in the dark. Post-translationally, phosphorylated by OSK4 in the presence of HDR1.

The protein localises to the nucleus. Probable transcription factor involved in the regulation of flower development. Required for the promotion of flowering under short day (SD) conditions and the suppression of flowering under long day (LD) conditions. Positively regulates the floral activator HEADING DATE 3a (HD3A) under SD and negatively under LD conditions. This is Zinc finger protein HD1 from Oryza sativa subsp. japonica (Rice).